A 214-amino-acid polypeptide reads, in one-letter code: Adenylate kinase (214 aa).

Position 10-15 (10-15) interacts with ATP; it reads GAGKGT. The NMP stretch occupies residues 30 to 59; sequence STGDMLRAAVKAGTELGKQAKEIMDAGKLV. AMP-binding positions include T31, R36, 57 to 59, 85 to 88, and Q92; these read KLV and GFPR. Residues 122 to 159 form an LID region; that stretch reads GRRVHAASGRVYHVKFNPPKVEDKDDVTGEDLSVRKDD. ATP is bound by residues R123 and 132 to 133; that span reads VY. Residues R156 and R167 each contribute to the AMP site. R200 lines the ATP pocket.

This sequence belongs to the adenylate kinase family. Monomer.

The protein localises to the cytoplasm. It carries out the reaction AMP + ATP = 2 ADP. Its pathway is purine metabolism; AMP biosynthesis via salvage pathway; AMP from ADP: step 1/1. Functionally, catalyzes the reversible transfer of the terminal phosphate group between ATP and AMP. Plays an important role in cellular energy homeostasis and in adenine nucleotide metabolism. In Pectobacterium atrosepticum (strain SCRI 1043 / ATCC BAA-672) (Erwinia carotovora subsp. atroseptica), this protein is Adenylate kinase.